Consider the following 261-residue polypeptide: Type III pantothenate kinase (261 aa).

An ATP-binding site is contributed by 7–14 (EQGNTNTM). 108-111 (GADR) contacts substrate. Aspartate 110 serves as the catalytic Proton acceptor. Residue aspartate 130 participates in K(+) binding. Position 133 (threonine 133) interacts with ATP. Threonine 187 is a substrate binding site.

Belongs to the type III pantothenate kinase family. As to quaternary structure, homodimer. NH4(+) is required as a cofactor. Requires K(+) as cofactor.

The protein resides in the cytoplasm. The catalysed reaction is (R)-pantothenate + ATP = (R)-4'-phosphopantothenate + ADP + H(+). The protein operates within cofactor biosynthesis; coenzyme A biosynthesis; CoA from (R)-pantothenate: step 1/5. In terms of biological role, catalyzes the phosphorylation of pantothenate (Pan), the first step in CoA biosynthesis. The chain is Type III pantothenate kinase from Caulobacter vibrioides (strain ATCC 19089 / CIP 103742 / CB 15) (Caulobacter crescentus).